The sequence spans 1012 residues: ATP-dependent DNA helicase MPH1 (1012 aa).

Residues 94-261 enclose the Helicase ATP-binding domain; it reads IVQKSLYQNT…EVVNNLNISN (168 aa). 107–114 contributes to the ATP binding site; sequence IPTGMGKT. A DEAH box motif is present at residues 209–212; it reads DEAH. One can recognise a Helicase C-terminal domain in the interval 430–654; sequence KLQKIINELS…NFVEYKKSDR (225 aa). The segment at 493 to 555 is disordered; it reads DEGFIRKNKP…AQISGMNQKQ (63 aa). The span at 498–510 shows a compositional bias: basic residues; sequence RKNKPKGRKKADR. Residues 511 to 537 are compositionally biased toward basic and acidic residues; that stretch reads LKRLEEDKQKQLSKAKQKEQEKVERSS.

This sequence belongs to the DEAD box helicase family. DEAH subfamily. FANCM sub-subfamily. As to quaternary structure, interacts with the MHF histone-fold complex to form the FANCM-MHF complex.

The protein resides in the nucleus. The enzyme catalyses ATP + H2O = ADP + phosphate + H(+). Its function is as follows. ATP-dependent DNA helicase involved in DNA damage repair by homologous recombination and in genome maintenance. Capable of unwinding D-loops. Plays a role in limiting crossover recombinants during mitotic DNA double-strand break (DSB) repair. Component of a FANCM-MHF complex which promotes gene conversion at blocked replication forks, probably by reversal of the stalled fork. The polypeptide is ATP-dependent DNA helicase MPH1 (Vanderwaltozyma polyspora (strain ATCC 22028 / DSM 70294 / BCRC 21397 / CBS 2163 / NBRC 10782 / NRRL Y-8283 / UCD 57-17) (Kluyveromyces polysporus)).